Here is a 336-residue protein sequence, read N- to C-terminus: Neuropeptides B/W receptor type 2 (336 aa).

Positions 1–25 (MMEATGLEGLESTSSPCPGSTGTGL) are disordered. The Extracellular portion of the chain corresponds to 1 to 45 (MMEATGLEGLESTSSPCPGSTGTGLSWDNGTRHNATFPEPLPALY). Positions 12-25 (STSSPCPGSTGTGL) are enriched in low complexity. N-linked (GlcNAc...) asparagine glycans are attached at residues Asn29 and Asn34. A helical membrane pass occupies residues 46-68 (VLLPVVYSVICAVGLVGNAAVIC). The Cytoplasmic segment spans residues 69–80 (VILRAPKMKTVT). The helical transmembrane segment at 81–103 (HVFILNLAIADGLFTLVLPTNIA) threads the bilayer. Over 104 to 127 (EHLLQRWPFGEVLCKLVLAIDHCN) the chain is Extracellular. The cysteines at positions 117 and 197 are disulfide-linked. The chain crosses the membrane as a helical span at residues 128-146 (IFSSVYFLAAMSIDRYLVV). At 147-165 (LATARSRRMPRRTVHRAKV) the chain is on the cytoplasmic side. The helical transmembrane segment at 166–188 (ASLCVWLGVTVAVLPFLTFAGVY) threads the bilayer. Over 189 to 213 (NNELQVTSCGLSFPRPERAWFQASR) the chain is Extracellular. The chain crosses the membrane as a helical span at residues 214–236 (IYTLVLGFVVPMCTLCVLYADLL). At 237–256 (RRLRALRLHSGAKALGKAKR) the chain is on the cytoplasmic side. Residues 257–279 (KVSLLVLAVLAVGLLCWTPFHLA) traverse the membrane as a helical segment. The Extracellular segment spans residues 280–293 (SIVALTTDLPQTPL). The chain crosses the membrane as a helical span at residues 294–316 (VIIVSYVVTSLSYTSSCLNPFLY). Topologically, residues 317 to 336 (AFLDHSFRKSLRTACRCQGA) are cytoplasmic.

It belongs to the G-protein coupled receptor 1 family.

Its subcellular location is the cell membrane. Functionally, interacts specifically with a number of opioid ligands. Receptor for neuropeptides B and W, which may be involved in neuroendocrine system regulation, food intake and the organization of other signals. The sequence is that of Neuropeptides B/W receptor type 2 (NPBWR2) from Bos taurus (Bovine).